The following is a 463-amino-acid chain: EPD1-interacting receptor-like cytoplasmic serine/threonine-protein kinase (463 aa).

One can recognise a Protein kinase domain in the interval 91–383 (FSSANFLGKG…LTDIPIGPFV (293 aa)). Residues 97–105 (LGKGGFGPV) and K126 contribute to the ATP site. Phosphotyrosine is present on residues Y171 and Y173. The active-site Proton acceptor is D221.

The protein belongs to the protein kinase superfamily. Ser/Thr protein kinase family. Interacts with the V.dahliae elicitor EPD1 (AC G2WWH6). In terms of processing, phosphorylated at Tyr-171 and Tyr-173 in the presence of pathogen-associated molecular patterns (PAMPs); this triggers the expression of pathogenesis-related genes.

It is found in the cell membrane. The catalysed reaction is L-seryl-[protein] + ATP = O-phospho-L-seryl-[protein] + ADP + H(+). It carries out the reaction L-threonyl-[protein] + ATP = O-phospho-L-threonyl-[protein] + ADP + H(+). Required for pathogen-associated molecular pattern (PAMP, e.g. chitin and flg22)-triggered immunity (PTI) involving reactive oxygen species (ROS) accumulation and triggering plant defense, including defense-related gene expression (e.g. PR1 and LOX). Ensures specific recognition of the EPD1 effector of Verticillium dahliae, resulting in a hypersensitive response known as effector-triggered immunity (ETI), characterized by the activation of programmed cell death to limit infection by the pathogen. Priming plants with the incompatible pathogen V.dahliae leads to an increased resistance to both the broad-host-range filamentous pathogen Botrytis cinerea and the semibiotrophic pathogen Phytophthora capsici, as a result of systemic acquired resistance (SAR). This Nicotiana benthamiana protein is EPD1-interacting receptor-like cytoplasmic serine/threonine-protein kinase.